Reading from the N-terminus, the 158-residue chain is MLVLPEELREKLKKPFGKVYKTLPDIDGDIVTVGDIVTKTAIENNIIPKLSIFDLKTRRNIPVKINHVFKKVIKVKNPPGCISDEAIESIKYLSTINDRNIALLVDGEEDLLALIVIKYFPIGTYVLYGQPDEGIVVLKINKKLKQEIEEILKQFKKI.

GTP contacts are provided by Asp35, Ile36, Val37, Asp54, Lys56, Glu109, and Asp132.

The protein belongs to the GTP-dependent DPCK family.

It catalyses the reaction 3'-dephospho-CoA + GTP = GDP + CoA + H(+). It functions in the pathway cofactor biosynthesis; coenzyme A biosynthesis. Functionally, catalyzes the GTP-dependent phosphorylation of the 3'-hydroxyl group of dephosphocoenzyme A to form coenzyme A (CoA). The protein is GTP-dependent dephospho-CoA kinase of Methanocaldococcus jannaschii (strain ATCC 43067 / DSM 2661 / JAL-1 / JCM 10045 / NBRC 100440) (Methanococcus jannaschii).